The chain runs to 997 residues: uncharacterized protein (997 aa).

Belongs to the MG414/MG415 family.

This is an uncharacterized protein from Mycoplasma pneumoniae (strain ATCC 29342 / M129 / Subtype 1) (Mycoplasmoides pneumoniae).